The primary structure comprises 468 residues: uncharacterized protein (468 aa).

A disordered region spans residues 447 to 468 (AVHVSNGDKPKVALPDTQLGSH).

The protein belongs to the mycobacterial PPE family.

This is an uncharacterized protein from Mycobacterium tuberculosis (strain ATCC 25618 / H37Rv).